The following is a 451-amino-acid chain: Enolase (451 aa).

Position 163 (Q163) interacts with (2R)-2-phosphoglycerate. The Proton donor role is filled by E205. 3 residues coordinate Mg(2+): D258, E308, and D335. Positions 360, 389, 390, and 411 each coordinate (2R)-2-phosphoglycerate. Catalysis depends on K360, which acts as the Proton acceptor.

The protein belongs to the enolase family. The cofactor is Mg(2+).

It localises to the cytoplasm. The protein resides in the secreted. It is found in the cell surface. The enzyme catalyses (2R)-2-phosphoglycerate = phosphoenolpyruvate + H2O. It functions in the pathway carbohydrate degradation; glycolysis; pyruvate from D-glyceraldehyde 3-phosphate: step 4/5. In terms of biological role, catalyzes the reversible conversion of 2-phosphoglycerate (2-PG) into phosphoenolpyruvate (PEP). It is essential for the degradation of carbohydrates via glycolysis. This Mycoplasma mycoides subsp. mycoides SC (strain CCUG 32753 / NCTC 10114 / PG1) protein is Enolase.